The following is a 519-amino-acid chain: uncharacterized protein (519 aa).

Transmembrane regions (helical) follow at residues 19–39, 42–62, 87–107, 128–148, 179–199, 220–240, 270–290, 311–331, 345–365, 386–406, 413–433, 475–495, and 496–516; these read FSSS…AIAT, VLVS…DWQI, MNIV…TVSG, LLAA…SLAV, VMMP…GLLA, FYAI…FDIA, LILP…YTGA, VGTS…LLII, WIVG…AWTI, IPMQ…AFST, FGIM…ELLL, LPYA…VGFT, and YSGL…IFAV.

Its subcellular location is the cell membrane. This is an uncharacterized protein from Haemophilus influenzae (strain ATCC 51907 / DSM 11121 / KW20 / Rd).